A 481-amino-acid chain; its full sequence is Putative cytochrome P450 520B1 (481 aa).

Residue C427 participates in heme binding.

The protein belongs to the cytochrome P450 family. Heme is required as a cofactor.

This is Putative cytochrome P450 520B1 (cyp520B1) from Dictyostelium discoideum (Social amoeba).